Here is a 1679-residue protein sequence, read N- to C-terminus: Protein MLP2 (1679 aa).

Coiled-coil stretches lie at residues 32 to 176 (AKFE…KYDT), 233 to 466 (YNKF…RQVK), 516 to 1064 (FSNV…EREL), and 1099 to 1491 (KLVS…ENAG). Short sequence motifs (bipartite nuclear localization signal) lie at residues 417-433 (KRSTELLETVSLTKRKQ), 639-655 (RKELLIYKKSQCKKKTT), and 1433-1449 (KKEWLKEYEDETLRRIK). Disordered stretches follow at residues 1495-1521 (FLDNKGSGEDAEEELWNSPSKGNSERP) and 1632-1679 (DLTN…ASNE). Composition is skewed to polar residues over residues 1511 to 1520 (NSPSKGNSER) and 1646 to 1661 (IGSTSKRPIESGTSSD). Serine 1512 carries the post-translational modification Phosphoserine. The segment covering 1662–1671 (PDTKKVKESP) has biased composition (basic and acidic residues). Serine 1670 is subject to Phosphoserine.

Component of the nuclear complex (NPC). NPC constitutes the exclusive means of nucleocytoplasmic transport. NPCs allow the passive diffusion of ions and small molecules and the active, nuclear transport receptor-mediated bidirectional transport of macromolecules such as proteins, RNAs, ribonucleoparticles (RNPs), and ribosomal subunits across the nuclear envelope. Due to its 8-fold rotational symmetry, all subunits are present with 8 copies or multiples thereof. Interacts with NUP60 and NIC96, which tether it to the nuclear pore complex. Component of the spindle pole body core in which it interacts directly with SPC110, SPC42 and SPC29. Also interacts with YKU70 (HDF1) and MLP1.

The protein localises to the nucleus. It is found in the cytoplasm. It localises to the cytoskeleton. The protein resides in the microtubule organizing center. Its subcellular location is the spindle pole body. The protein localises to the nuclear pore complex. Together with the closely related MLP1, involved in the structural and functional organization of perinuclear chromatin. MLP1/MLP2 associate with the nuclear pore complex and form filamentous structures along the nuclear periphery. Has a role in the localization of Esc1 to nucleolar regions. Together with MLP1, mediates tethering of the some telomeres to the nuclear periphery, probably mediated by YKU70/YKU80 (HDF1/HDF2) heterodimer and show perinuclear location dependent silencing. MLP1 and MLP2 are involved in telomere length regulation but not silencing or telomere anchoring. Plays a role in the incorporation of components into the spindle pole body. Involved in double-strand break repair, probably also mediated by the YKU70/YKU80 (HDF1/HDF2) heterodimer. The sequence is that of Protein MLP2 (MLP2) from Saccharomyces cerevisiae (strain ATCC 204508 / S288c) (Baker's yeast).